Reading from the N-terminus, the 80-residue chain is Histone H1.M6.1 (80 aa).

Residues M1–K80 are disordered. Residues A11–K80 are compositionally biased toward basic residues.

The protein localises to the nucleus. Its subcellular location is the chromosome. The polypeptide is Histone H1.M6.1 (Trypanosoma cruzi).